Here is a 1071-residue protein sequence, read N- to C-terminus: Carbamoyl phosphate synthase large chain (1071 aa).

The carboxyphosphate synthetic domain stretch occupies residues 1 to 403; sequence MPKRTDLKSI…SFQKALRGLE (403 aa). ATP is bound by residues Arg-129, Arg-169, Gly-175, Gly-176, Gln-208, Val-210, Glu-215, Gly-241, Val-242, His-243, Gln-285, and Glu-299. One can recognise an ATP-grasp 1 domain in the interval 133 to 328; that stretch reads KEAMEKIGLS…IAKVAAKLAV (196 aa). Residues Gln-285, Glu-299, and Asn-301 each contribute to the Mg(2+) site. Residues Gln-285, Glu-299, and Asn-301 each contribute to the Mn(2+) site. The interval 404–548 is oligomerization domain; that stretch reads TGLCGFNPRS…YSTYEEECES (145 aa). The interval 549-930 is carbamoyl phosphate synthetic domain; sequence RPSDRKKVMI…AYYKAQLGAG (382 aa). An ATP-grasp 2 domain is found at 673-864; it reads QKVLNDLGLR…LAKVGARCMA (192 aa). ATP-binding residues include Arg-709, Phe-748, Leu-750, Glu-755, Gly-780, Ile-781, His-782, Ser-783, Gln-823, and Glu-835. Gln-823, Glu-835, and Asn-837 together coordinate Mg(2+). Residues Gln-823, Glu-835, and Asn-837 each coordinate Mn(2+). The MGS-like domain occupies 931–1071; the sequence is ERLNPTGKIF…ELHGRLKNRN (141 aa). The segment at 931–1071 is allosteric domain; it reads ERLNPTGKIF…ELHGRLKNRN (141 aa).

This sequence belongs to the CarB family. In terms of assembly, composed of two chains; the small (or glutamine) chain promotes the hydrolysis of glutamine to ammonia, which is used by the large (or ammonia) chain to synthesize carbamoyl phosphate. Tetramer of heterodimers (alpha,beta)4. It depends on Mg(2+) as a cofactor. Mn(2+) serves as cofactor.

The catalysed reaction is hydrogencarbonate + L-glutamine + 2 ATP + H2O = carbamoyl phosphate + L-glutamate + 2 ADP + phosphate + 2 H(+). The enzyme catalyses hydrogencarbonate + NH4(+) + 2 ATP = carbamoyl phosphate + 2 ADP + phosphate + 2 H(+). Its pathway is amino-acid biosynthesis; L-arginine biosynthesis; carbamoyl phosphate from bicarbonate: step 1/1. The protein operates within pyrimidine metabolism; UMP biosynthesis via de novo pathway; (S)-dihydroorotate from bicarbonate: step 1/3. In terms of biological role, large subunit of the glutamine-dependent carbamoyl phosphate synthetase (CPSase). CPSase catalyzes the formation of carbamoyl phosphate from the ammonia moiety of glutamine, carbonate, and phosphate donated by ATP, constituting the first step of 2 biosynthetic pathways, one leading to arginine and/or urea and the other to pyrimidine nucleotides. The large subunit (synthetase) binds the substrates ammonia (free or transferred from glutamine from the small subunit), hydrogencarbonate and ATP and carries out an ATP-coupled ligase reaction, activating hydrogencarbonate by forming carboxy phosphate which reacts with ammonia to form carbamoyl phosphate. This chain is Carbamoyl phosphate synthase large chain, found in Neisseria meningitidis serogroup B (strain ATCC BAA-335 / MC58).